The sequence spans 325 residues: Transaldolase (325 aa).

K125 acts as the Schiff-base intermediate with substrate in catalysis.

Belongs to the transaldolase family. Type 2 subfamily.

It is found in the cytoplasm. It catalyses the reaction D-sedoheptulose 7-phosphate + D-glyceraldehyde 3-phosphate = D-erythrose 4-phosphate + beta-D-fructose 6-phosphate. It functions in the pathway carbohydrate degradation; pentose phosphate pathway; D-glyceraldehyde 3-phosphate and beta-D-fructose 6-phosphate from D-ribose 5-phosphate and D-xylulose 5-phosphate (non-oxidative stage): step 2/3. Transaldolase is important for the balance of metabolites in the pentose-phosphate pathway. The polypeptide is Transaldolase (Campylobacter jejuni subsp. jejuni serotype O:6 (strain 81116 / NCTC 11828)).